The chain runs to 115 residues: Ribonuclease P protein component (115 aa).

It belongs to the RnpA family. Consists of a catalytic RNA component (M1 or rnpB) and a protein subunit.

It carries out the reaction Endonucleolytic cleavage of RNA, removing 5'-extranucleotides from tRNA precursor.. Its function is as follows. RNaseP catalyzes the removal of the 5'-leader sequence from pre-tRNA to produce the mature 5'-terminus. It can also cleave other RNA substrates such as 4.5S RNA. The protein component plays an auxiliary but essential role in vivo by binding to the 5'-leader sequence and broadening the substrate specificity of the ribozyme. In Bacillus cereus (strain G9842), this protein is Ribonuclease P protein component.